Reading from the N-terminus, the 285-residue chain is MRHTFTTEIMPLPTPEEKNINRLRKSFWEAVEEFDLIEPGDKIMVCLSGGKDSYTMLDMFIHAQTVRKNFEIIAVNLDQKQPDYPEHILPEYLTHLGVNFKIVEKDTYSIVIDKTPAGKTMCSLCSRLRRGSLYATAEELGVTKIALGHHREDVLETFFLNLFFSGKMEAMPAKYRTDDGKHVVIRPLVYCKENEIAEYSIYKKFPIIPCNLCGSQENMQRKITKKMLADWELQYPNRKEVIYNALKNISPSHLFDRDLYDFKELKHRVEELNEKDTPKVEEYIP.

The PP-loop motif signature appears at 48 to 53; it reads SGGKDS. Positions 122, 125, and 213 each coordinate [4Fe-4S] cluster.

It belongs to the TtcA family. Homodimer. The cofactor is Mg(2+). Requires [4Fe-4S] cluster as cofactor.

The protein localises to the cytoplasm. It carries out the reaction cytidine(32) in tRNA + S-sulfanyl-L-cysteinyl-[cysteine desulfurase] + AH2 + ATP = 2-thiocytidine(32) in tRNA + L-cysteinyl-[cysteine desulfurase] + A + AMP + diphosphate + H(+). Its pathway is tRNA modification. Its function is as follows. Catalyzes the ATP-dependent 2-thiolation of cytidine in position 32 of tRNA, to form 2-thiocytidine (s(2)C32). The sulfur atoms are provided by the cysteine/cysteine desulfurase (IscS) system. This is tRNA-cytidine(32) 2-sulfurtransferase from Cytophaga hutchinsonii (strain ATCC 33406 / DSM 1761 / CIP 103989 / NBRC 15051 / NCIMB 9469 / D465).